A 446-amino-acid polypeptide reads, in one-letter code: Ribulose bisphosphate carboxylase large chain (446 aa).

Residues Asn89 and Thr139 each contribute to the substrate site. Lys141 serves as the catalytic Proton acceptor. Residue Lys143 coordinates substrate. The Mg(2+) site is built by Lys167, Asp169, and Glu170. Lys167 is subject to N6-carboxylysine. His260 serves as the catalytic Proton acceptor. Residues Arg261, His293, and Ser345 each contribute to the substrate site.

It belongs to the RuBisCO large chain family. Type I subfamily. In terms of assembly, heterohexadecamer of 8 large chains and 8 small chains; disulfide-linked. The disulfide link is formed within the large subunit homodimers. The cofactor is Mg(2+). In terms of processing, the disulfide bond which can form in the large chain dimeric partners within the hexadecamer appears to be associated with oxidative stress and protein turnover.

It is found in the plastid. The protein localises to the chloroplast. The enzyme catalyses 2 (2R)-3-phosphoglycerate + 2 H(+) = D-ribulose 1,5-bisphosphate + CO2 + H2O. The catalysed reaction is D-ribulose 1,5-bisphosphate + O2 = 2-phosphoglycolate + (2R)-3-phosphoglycerate + 2 H(+). RuBisCO catalyzes two reactions: the carboxylation of D-ribulose 1,5-bisphosphate, the primary event in carbon dioxide fixation, as well as the oxidative fragmentation of the pentose substrate in the photorespiration process. Both reactions occur simultaneously and in competition at the same active site. The chain is Ribulose bisphosphate carboxylase large chain from Exacum affine (Persian violet).